Here is a 272-residue protein sequence, read N- to C-terminus: METLELQGAKLRYHQVGQGPVLIFIPGANGTGDIFLPLAEQLKDHFTVVAVDRRDYGESELTEPLPDSASNPDSDYRVKRDAQDIAELAKSLSDEPVYILGSIVAMHVLKDYPEVVKKIAFHEPPINTFLPDSTYWKDKNDDIVHQILTEGLEKGMKTFGETLNIAPIDAKMMSQPADTEEGRIEQYKRTMFWSEFEIRQYTHSDITLDDFTKYSDKITLLNGTDSRGSFPQDVNFYINKETSIPIVDIPGGHLGYIQKPEGFADVLLNMWG.

The AB hydrolase-1 domain occupies 20–133; that stretch reads PVLIFIPGAN…PPINTFLPDS (114 aa).

Belongs to the AB hydrolase superfamily.

This is an uncharacterized protein from Staphylococcus aureus (strain MSSA476).